A 691-amino-acid chain; its full sequence is Choline transporter-like 1 (691 aa).

Positions 1 to 10 (MGCAESKDGE) are enriched in basic and acidic residues. Positions 1 to 20 (MGCAESKDGEGEAQNNRPKY) are disordered. 3 helical membrane-spanning segments follow: residues 28–48 (WLAI…FSFV), 205–225 (WHII…LVTM), and 232–252 (IVSW…TVAL). Asparagine 261 carries N-linked (GlcNAc...) asparagine glycosylation. 2 helical membrane-spanning segments follow: residues 282-302 (VLTL…VIYF) and 332-352 (LLAF…IICL). An N-linked (GlcNAc...) asparagine glycan is attached at asparagine 385. 4 helical membrane passes run 408 to 428 (SMFW…FACQ), 527 to 547 (VVAI…NAMA), 562 to 582 (FILF…GIVL), and 591 to 611 (FYMA…HIIL).

It belongs to the CTL (choline transporter-like) family.

The protein resides in the membrane. The protein is Choline transporter-like 1 of Drosophila melanogaster (Fruit fly).